Consider the following 191-residue polypeptide: Guanylate kinase (191 aa).

In terms of domain architecture, Guanylate kinase-like spans 6-184 (GLIIILSSPS…TIQQIHTIIL (179 aa)). 13–20 (SPSGAGKS) serves as a coordination point for ATP.

Belongs to the guanylate kinase family.

The protein localises to the cytoplasm. It catalyses the reaction GMP + ATP = GDP + ADP. Functionally, essential for recycling GMP and indirectly, cGMP. This Rickettsia bellii (strain RML369-C) protein is Guanylate kinase.